We begin with the raw amino-acid sequence, 218 residues long: Small ribosomal subunit protein uS3 (218 aa).

One can recognise a KH type-2 domain in the interval 38–106 (IREFINQRLS…RVHINILEIK (69 aa)).

Belongs to the universal ribosomal protein uS3 family. As to quaternary structure, part of the 30S ribosomal subunit. Forms a tight complex with proteins S10 and S14.

Binds the lower part of the 30S subunit head. Binds mRNA in the 70S ribosome, positioning it for translation. This is Small ribosomal subunit protein uS3 from Bacillus licheniformis (strain ATCC 14580 / DSM 13 / JCM 2505 / CCUG 7422 / NBRC 12200 / NCIMB 9375 / NCTC 10341 / NRRL NRS-1264 / Gibson 46).